We begin with the raw amino-acid sequence, 1219 residues long: Disease resistance-like protein DSC1 (1219 aa).

Residues 9-176 (AEFDVFLSFR…EIAVDTFKKL (168 aa)) form the TIR domain. Residue E83 is part of the active site. Residues 197–446 (LEKLLSWEDL…DIACFFRSEN (250 aa)) form the NB-ARC domain. Position 216–222 (216–222 (GMVGIGK)) interacts with ATP. LRR repeat units lie at residues 468 to 493 (LVDKCLITLSDNRIEMHDMLQTMAKE), 538 to 563 (TDKIRGIFLDTSKLRAMRLSAKAFQG), 597 to 619 (PNELTYLHWHGYPLQSIPLDFDP), 620 to 642 (KNLVDLKLPHSQLEEIWDDEKDV), 665 to 689 (AHNLERLNLEGCTSLKKLPSTINCL), 690 to 713 (EKLIYLNLRDCTSLRSLPKGIKTQ), 733 to 757 (SENVEVLLLDGTVIKSLPESIQTFR), 759 to 780 (LALLNLKNCKKLKHLSSDLYKL), 804 to 827 (MESLEILLMDDTSITEMPKMMHLS), 854 to 877 (CSRLTDLYLSRCSLYKLPDNIGGL), and 878 to 899 (SSLQSLCLSGNNIENLPESFNQ).

It belongs to the disease resistance NB-LRR family. In terms of assembly, interacts with CAMTA3 and DSC2.

The catalysed reaction is NAD(+) + H2O = ADP-D-ribose + nicotinamide + H(+). Its function is as follows. TIR-NB-LRR receptor-like protein involved in plant defense. Acts as a trigger of hypersensitive response (HR). Functions as a guard of CAMTA3, a negative regulator of immunity, during pathogen infection. This is Disease resistance-like protein DSC1 from Arabidopsis thaliana (Mouse-ear cress).